The following is a 1490-amino-acid chain: Leucine-rich repeat-containing protein 7 (1490 aa).

17 LRR repeats span residues 23-44 (IISVLDYSHCSLQQVPKEVFNF), 47-68 (TLEELYLDANQIEELPKQLFNC), 70-91 (ALRKLSIPDNDLSSLPTSIASL), 93-114 (NLKELDISKNGVQEFPENIKCC), 116-137 (CLTIIEASVNPISKLPDGFTQL), 139-161 (NLTQLYLNDAFLEFLPANFGRLV), 162-183 (KLRILELRENHLKTLPKSMHKL), 185-206 (QLERLDLGNNEFSELPEVLDQI), 208-229 (NLRELWMDNNALQVLPGSIGKL), 231-253 (MLVYLDMSKNRIETVDMDISGCE), 254-275 (ALEDLLLSSNMLQQLPDSIGLL), 277-298 (KLTTLKVDDNQLTMLPNTIGNL), 300-321 (LLEEFDCSCNELESLPPTIGYL), 323-344 (SLRTLAVDENFLPELPREIGSC), 346-367 (NVTVMSLRSNKLEFLPEEIGQM), 369-391 (RLRVLNLSDNRLKNLPFSFTKLK), and 392-413 (ELAALWLSDNQSKALIPLQTEA). A phosphoserine mark is found at Ser-439, Ser-441, and Ser-443. Basic and acidic residues predominate over residues 663 to 676 (KKESTDESEVDKTH). 3 disordered regions span residues 663–709 (KKES…VGSL), 775–808 (DNTGFVSEEATGENANNNPLLSSKARSVPAHGRR), and 822–899 (ELEQ…YHDP). The segment covering 677-686 (CLNNSVSSGT) has biased composition (polar residues). Over residues 687 to 700 (YSDYSPSQASSASS) the composition is skewed to low complexity. Over residues 787–799 (ENANNNPLLSSKA) the composition is skewed to polar residues. At Thr-831 the chain carries Phosphothreonine. Ser-850 bears the Phosphoserine mark. Positions 859–871 (PSKLETTPTTSPL) are enriched in low complexity. Residue Thr-865 is modified to Phosphothreonine. The residue at position 869 (Ser-869) is a Phosphoserine. Basic and acidic residues predominate over residues 872–882 (PERKDHMKEPT). Phosphoserine is present on residues Ser-947, Ser-949, and Ser-1118. Arg-1149 carries the post-translational modification Omega-N-methylarginine. Positions 1194 to 1217 (LTQRRPLSARSYSTESYGASQTRP) are enriched in polar residues. Positions 1194-1218 (LTQRRPLSARSYSTESYGASQTRPV) are disordered. Ser-1233 bears the Phosphoserine mark. Disordered stretches follow at residues 1238–1265 (GNYGDKTSDNSDIKTRPTPVKGEESCGK) and 1282–1312 (RLDRTPSQQSNILDNGQEDVSPSGQWNPYPL). Basic and acidic residues predominate over residues 1243–1263 (KTSDNSDIKTRPTPVKGEESC). Residues 1286–1307 (TPSQQSNILDNGQEDVSPSGQW) are compositionally biased toward polar residues. Phosphoserine is present on residues Ser-1288 and Ser-1392. The PDZ domain maps to 1398 to 1488 (EQFCVRIEKN…TVDLVIQREL (91 aa)).

This sequence belongs to the LAP (LRR and PDZ) protein family. In terms of assembly, interacts with CNKSR2 and DLG4. Interacts with CTNND2/Catenin delta-2. Forms a complex with N-cadherin through CTNND2. Interacts with CAMK2A. In terms of processing, O-glycosylated and phosphorylated. Brain-specific. Highly concentrated at synapses.

Its subcellular location is the cytoplasm. The protein resides in the postsynaptic density. In terms of biological role, required for normal synaptic spine architecture and function. Necessary for DISC1 and GRM5 localization to postsynaptic density complexes and for both N-methyl D-aspartate receptor-dependent and metabotropic glutamate receptor-dependent long term depression. The sequence is that of Leucine-rich repeat-containing protein 7 (Lrrc7) from Rattus norvegicus (Rat).